Here is a 157-residue protein sequence, read N- to C-terminus: MAFKIIEKQPQQIVSIRVVGPYHETIPKGFDQLSSLYTQYQIPGKDWLVLYWDNPETNPPAELRADVSLSVADDYVLPPELSDHLQLQVIPAGLYAVYHTRVSDDDYAKAWGELYNQHLPQSGYRPTEGACYEVYLNDGRADGYFDIDIYQSVEKDQ.

Belongs to the DNA gyrase inhibitor family. As to quaternary structure, interacts with DNA gyrase.

The protein resides in the cytoplasm. Its function is as follows. Inhibits the supercoiling activity of DNA gyrase. Acts by inhibiting DNA gyrase at an early step, prior to (or at the step of) binding of DNA by the gyrase. It protects cells against toxins that target DNA gyrase, by inhibiting activity of these toxins and reducing the formation of lethal double-strand breaks in the cell. The protein is DNA gyrase inhibitor of Yersinia enterocolitica serotype O:8 / biotype 1B (strain NCTC 13174 / 8081).